The following is a 396-amino-acid chain: Agropine synthesis cyclase (396 aa).

Belongs to the peptidase M24B family.

The chain is Agropine synthesis cyclase (ags) from Rhizobium rhizogenes (Agrobacterium rhizogenes).